The primary structure comprises 642 residues: Threonine--tRNA ligase (642 aa).

Positions methionine 1–aspartate 61 constitute a TGS domain. Residues aspartate 243–proline 534 form a catalytic region. Residues cysteine 334, histidine 385, and histidine 511 each coordinate Zn(2+).

It belongs to the class-II aminoacyl-tRNA synthetase family. Homodimer. Zn(2+) is required as a cofactor.

The protein localises to the cytoplasm. It carries out the reaction tRNA(Thr) + L-threonine + ATP = L-threonyl-tRNA(Thr) + AMP + diphosphate + H(+). In terms of biological role, catalyzes the attachment of threonine to tRNA(Thr) in a two-step reaction: L-threonine is first activated by ATP to form Thr-AMP and then transferred to the acceptor end of tRNA(Thr). Also edits incorrectly charged L-seryl-tRNA(Thr). This Buchnera aphidicola subsp. Acyrthosiphon pisum (strain 5A) protein is Threonine--tRNA ligase.